The following is a 386-amino-acid chain: Putative 8-amino-7-oxononanoate synthase (386 aa).

Residue arginine 22 coordinates substrate. 109 to 110 (GY) contributes to the pyridoxal 5'-phosphate binding site. Histidine 134 provides a ligand contact to substrate. Pyridoxal 5'-phosphate-binding positions include serine 182, 207-210 (DEAH), and 238-241 (TLSK). An N6-(pyridoxal phosphate)lysine modification is found at lysine 241. Threonine 356 is a binding site for substrate.

It belongs to the class-II pyridoxal-phosphate-dependent aminotransferase family. BioF subfamily. As to quaternary structure, homodimer. Requires pyridoxal 5'-phosphate as cofactor.

The catalysed reaction is 6-carboxyhexanoyl-[ACP] + L-alanine + H(+) = (8S)-8-amino-7-oxononanoate + holo-[ACP] + CO2. Its pathway is cofactor biosynthesis; biotin biosynthesis. Its function is as follows. Catalyzes the decarboxylative condensation of pimeloyl-[acyl-carrier protein] and L-alanine to produce 8-amino-7-oxononanoate (AON), [acyl-carrier protein], and carbon dioxide. The protein is Putative 8-amino-7-oxononanoate synthase (bioF) of Nostoc sp. (strain PCC 7120 / SAG 25.82 / UTEX 2576).